Here is a 139-residue protein sequence, read N- to C-terminus: uncharacterized protein (139 aa).

Positions 1-133 constitute a Globin domain; that stretch reads MLSEETIRVI…LAKTLITLEK (133 aa).

Belongs to the globin family.

This is an uncharacterized protein from Aquifex aeolicus (strain VF5).